The chain runs to 297 residues: Protein phosphatase PTC7 homolog (297 aa).

The N-terminal 27 residues, 1–27 (MFSVLSCGRLVARAVFGGLSQTDSRDY), are a transit peptide targeting the mitochondrion. The 265-residue stretch at 28–292 (SLVTASCGFG…DDITVLLSIV (265 aa)) folds into the PPM-type phosphatase domain. Mn(2+) contacts are provided by D71, G72, and D216.

This sequence belongs to the PP2C family. Mg(2+) serves as cofactor. Mn(2+) is required as a cofactor.

The protein localises to the mitochondrion matrix. It catalyses the reaction O-phospho-L-seryl-[protein] + H2O = L-seryl-[protein] + phosphate. It carries out the reaction O-phospho-L-threonyl-[protein] + H2O = L-threonyl-[protein] + phosphate. Functionally, protein phosphatase which positively regulates biosynthesis of the ubiquinone, coenzyme Q. Dephosphorylates the ubiquinone biosynthesis protein coq7 which is likely to lead to its activation. The polypeptide is Protein phosphatase PTC7 homolog (pptc7) (Xenopus laevis (African clawed frog)).